Reading from the N-terminus, the 662-residue chain is MSLSPEKANELKQIIHDHLIKMDIHGKIRDVLTETVQGDGHHKQCLLSEEDFMHALQRRGIVNDVMKDLHFTNMYNSHTEADSVNKSATHFMDQNITQLKTANIGQLKRQLYLQVVGGKAFLEQLQEPEPLPGQVCSTFTLHVHFRNQRFRSKPIPCACEPDIQEGFLLEIHRDGPGDASKMADATTMLSICDPVHMVLIKTDTSGDTTLVSSYFLDWRTVLSAPNGKISVSAELLGVGAEAKVPAGVLNLKLELYPPLTETLSPDVVTMQKSLERQKTAEKERLFLVYAKQWWQEFLDIRPSNKSKLVKIFAQDENGVNRPVCSYVRVLRAGRLLESPRQAARFVSLLAQERAPVVGGGVRQEQWASMMVFLCRNKGDCEDHATLLCSLLLGFGLDAYVCVGTKVKNIPHTWVMTCGTDGSITFWESFTAHRYLHRPIDPDAPSMILQPKPVHPYQTLGCVFNHKIFLANCQVSDAVERCVFDFTDGSRWKAMSEEAVRSVCDPGFNTSLPPTPPLCSSSLVPNEASNQLELEMRYLLSEHRKDLGLATVWDDHLSYLLSAALSAYELERCAGVSYGNEEFQDAVRRAVPDGHTFKAFPINFLHCNARRAFATCLRSPFCEEIVCCRGDHVRLAVRVRVFGYPESACAVWIMFACKYRSVL.

It belongs to the CEP76 family.

The protein resides in the cytoplasm. Its subcellular location is the cytoskeleton. It is found in the microtubule organizing center. It localises to the centrosome. The protein localises to the centriole. Functionally, centrosomal protein involved in regulation of centriole duplication. Required to limit centriole duplication to once per cell cycle by preventing centriole reduplication. This is Centrosomal protein of 76 kDa (cep76) from Danio rerio (Zebrafish).